Consider the following 288-residue polypeptide: MDVTAKYELIGLMAYPIRHSLSPEMQNKALEKAGLPFTYMAFEVDNDSFPAAIEGLKALKMRGTGVSMPNKQLACEYVDELTPAAKLVGAINTIVNDDGYLRGYNTDGTGHIRAIKESGFDIKGKTMVLLGAGGASTAIGAQGAIEGLKEIKLFNRRDEFFDKALAFAQRVNENTDCVVTVTDLADQQAFAEALASADILTNGTKVGMKPLENESLVNDISLLHPGLLVTECVYNPHMTKLLQQAQQAGCKTIDGYGMLLWQGAEQFTLWTGKDFPLEYVKQVMGFGA.

Residues K71 and D107 each contribute to the substrate site. NAD(+)-binding positions include 132–135 (AGGA), 155–158 (NRRD), K205, 232–235 (CVYN), and G255.

This sequence belongs to the shikimate dehydrogenase family. As to quaternary structure, homodimer.

It carries out the reaction L-quinate + NAD(+) = 3-dehydroquinate + NADH + H(+). The enzyme catalyses L-quinate + NADP(+) = 3-dehydroquinate + NADPH + H(+). The catalysed reaction is shikimate + NADP(+) = 3-dehydroshikimate + NADPH + H(+). It catalyses the reaction shikimate + NAD(+) = 3-dehydroshikimate + NADH + H(+). It participates in metabolic intermediate biosynthesis; chorismate biosynthesis; chorismate from D-erythrose 4-phosphate and phosphoenolpyruvate: step 4/7. Functionally, the actual biological function of YdiB remains unclear, nor is it known whether 3-dehydroshikimate or quinate represents the natural substrate. Catalyzes the reversible NAD-dependent reduction of both 3-dehydroshikimate (DHSA) and 3-dehydroquinate to yield shikimate (SA) and quinate, respectively. It can use both NAD or NADP for catalysis, however it has higher catalytic efficiency with NAD. The chain is Quinate/shikimate dehydrogenase from Escherichia coli O1:K1 / APEC.